The primary structure comprises 457 residues: Bifunctional protein GlmU (457 aa).

The tract at residues 1 to 230 is pyrophosphorylase; the sequence is MSKRYAVVLA…FEESLGVNDR (230 aa). Residues 9–12, Lys-23, Gln-73, and 78–79 each bind UDP-N-acetyl-alpha-D-glucosamine; these read LAAG and GT. Residue Asp-103 coordinates Mg(2+). Positions 140, 155, 170, and 228 each coordinate UDP-N-acetyl-alpha-D-glucosamine. Position 228 (Asn-228) interacts with Mg(2+). The tract at residues 231-251 is linker; it reads IALAEASKLMQRRINENHMRN. The segment at 252 to 457 is N-acetyltransferase; the sequence is GVTLVNPEST…GYAKHLNHGK (206 aa). The UDP-N-acetyl-alpha-D-glucosamine site is built by Arg-333 and Lys-351. His-363 (proton acceptor) is an active-site residue. Residues Tyr-366 and Asn-377 each contribute to the UDP-N-acetyl-alpha-D-glucosamine site. Acetyl-CoA contacts are provided by residues 386–387, Ala-423, and Arg-440; that span reads NY.

It in the N-terminal section; belongs to the N-acetylglucosamine-1-phosphate uridyltransferase family. This sequence in the C-terminal section; belongs to the transferase hexapeptide repeat family. Homotrimer. Mg(2+) is required as a cofactor.

It localises to the cytoplasm. The enzyme catalyses alpha-D-glucosamine 1-phosphate + acetyl-CoA = N-acetyl-alpha-D-glucosamine 1-phosphate + CoA + H(+). It carries out the reaction N-acetyl-alpha-D-glucosamine 1-phosphate + UTP + H(+) = UDP-N-acetyl-alpha-D-glucosamine + diphosphate. The protein operates within nucleotide-sugar biosynthesis; UDP-N-acetyl-alpha-D-glucosamine biosynthesis; N-acetyl-alpha-D-glucosamine 1-phosphate from alpha-D-glucosamine 6-phosphate (route II): step 2/2. It participates in nucleotide-sugar biosynthesis; UDP-N-acetyl-alpha-D-glucosamine biosynthesis; UDP-N-acetyl-alpha-D-glucosamine from N-acetyl-alpha-D-glucosamine 1-phosphate: step 1/1. Its pathway is bacterial outer membrane biogenesis; LPS lipid A biosynthesis. Functionally, catalyzes the last two sequential reactions in the de novo biosynthetic pathway for UDP-N-acetylglucosamine (UDP-GlcNAc). The C-terminal domain catalyzes the transfer of acetyl group from acetyl coenzyme A to glucosamine-1-phosphate (GlcN-1-P) to produce N-acetylglucosamine-1-phosphate (GlcNAc-1-P), which is converted into UDP-GlcNAc by the transfer of uridine 5-monophosphate (from uridine 5-triphosphate), a reaction catalyzed by the N-terminal domain. In Listeria monocytogenes serotype 4a (strain HCC23), this protein is Bifunctional protein GlmU.